The chain runs to 274 residues: Cytochrome b-c1 complex subunit Rieske, mitochondrial (274 aa).

Residues 79 to 103 are Mitochondrial matrix-facing; it reads SHTDVKVPDFCDYRRPEVLDSTKSS. The helical transmembrane segment at 104–140 threads the bilayer; sequence RESSEARKSFSYMVTAVTTVGVAYAAKNAVTQFVSSM. Over 141 to 274 the chain is Mitochondrial intermembrane; that stretch reads SASADVLAMA…FTSDDMVVVG (134 aa). The Rieske domain maps to 187–272; that stretch reads EAAVELSQLR…YEFTSDDMVV (86 aa). Positions 217, 219, 236, 239, and 241 each coordinate [2Fe-2S] cluster. Cys-222 and Cys-238 are oxidised to a cystine.

Belongs to the Rieske iron-sulfur protein family. Component of the ubiquinol-cytochrome c oxidoreductase (cytochrome b-c1 complex, complex III, CIII), a multisubunit enzyme composed of 11 subunits. The complex is composed of 3 respiratory subunits cytochrome b, cytochrome c1 and Rieske protein UQCRFS1, 2 core protein subunits UQCRC1/QCR1 and UQCRC2/QCR2, and 6 low-molecular weight protein subunits UQCRH/QCR6, UQCRB/QCR7, UQCRQ/QCR8, UQCR10/QCR9, UQCR11/QCR10 and subunit 9, the cleavage product of Rieske protein UQCRFS1. The complex exists as an obligatory dimer and forms supercomplexes (SCs) in the inner mitochondrial membrane with NADH-ubiquinone oxidoreductase (complex I, CI) and cytochrome c oxidase (complex IV, CIV), resulting in different assemblies (supercomplex SCI(1)III(2)IV(1) and megacomplex MCI(2)III(2)IV(2)). Incorporation of the Rieske protein UQCRFS1 is the penultimate step in complex III assembly. Interacts with TTC19, which is involved in the clearance of UQCRFS1 fragments. In terms of assembly, component of the ubiquinol-cytochrome c oxidoreductase (cytochrome b-c1 complex, complex III, CIII). Subunit 9 corresponds to the mitochondrial targeting sequence (MTS) of Rieske protein UQCRFS1. It is retained after processing and incorporated inside complex III, where it remains bound to the complex and localizes between the 2 core subunits UQCRC1/QCR1 and UQCRC2/QCR2. It depends on [2Fe-2S] cluster as a cofactor. Proteolytic processing is necessary for the correct insertion of UQCRFS1 in the complex III dimer. Several fragments are generated during UQCRFS1 insertion, most probably due to the endogenous matrix-processing peptidase (MPP) activity of the 2 core protein subunits UQCRC1/QCR1 and UQCRC2/QCR2, which are homologous to the 2 mitochondrial-processing peptidase (MPP) subunits beta-MPP and alpha-MPP respectively. The action of the protease is also necessary for the clearance of the UQCRFS1 fragments.

The protein resides in the mitochondrion inner membrane. It catalyses the reaction a quinol + 2 Fe(III)-[cytochrome c](out) = a quinone + 2 Fe(II)-[cytochrome c](out) + 2 H(+)(out). Component of the ubiquinol-cytochrome c oxidoreductase, a multisubunit transmembrane complex that is part of the mitochondrial electron transport chain which drives oxidative phosphorylation. The respiratory chain contains 3 multisubunit complexes succinate dehydrogenase (complex II, CII), ubiquinol-cytochrome c oxidoreductase (cytochrome b-c1 complex, complex III, CIII) and cytochrome c oxidase (complex IV, CIV), that cooperate to transfer electrons derived from NADH and succinate to molecular oxygen, creating an electrochemical gradient over the inner membrane that drives transmembrane transport and the ATP synthase. The cytochrome b-c1 complex catalyzes electron transfer from ubiquinol to cytochrome c, linking this redox reaction to translocation of protons across the mitochondrial inner membrane, with protons being carried across the membrane as hydrogens on the quinol. In the process called Q cycle, 2 protons are consumed from the matrix, 4 protons are released into the intermembrane space and 2 electrons are passed to cytochrome c. The Rieske protein is a catalytic core subunit containing a [2Fe-2S] iron-sulfur cluster. It cycles between 2 conformational states during catalysis to transfer electrons from the quinol bound in the Q(0) site in cytochrome b to cytochrome c1. Incorporation of UQCRFS1 is the penultimate step in complex III assembly. In terms of biological role, component of the ubiquinol-cytochrome c oxidoreductase (cytochrome b-c1 complex, complex III, CIII). UQCRFS1 undergoes proteolytic processing once it is incorporated in the complex III dimer. One of the fragments, called subunit 9, corresponds to its mitochondrial targeting sequence (MTS). The proteolytic processing is necessary for the correct insertion of UQCRFS1 in the complex III dimer, but the persistence of UQCRFS1-derived fragments may prevent newly imported UQCRFS1 to be processed and assembled into complex III and is detrimental for the complex III structure and function. The protein is Cytochrome b-c1 complex subunit Rieske, mitochondrial (UQCRFS1) of Colobus polykomos (Western black-and-white colobus monkey).